The following is a 228-amino-acid chain: Triosephosphate isomerase (228 aa).

Asparagine 11–lysine 13 serves as a coordination point for substrate. Histidine 95 serves as the catalytic Electrophile. Glutamate 143 serves as the catalytic Proton acceptor. Residues isoleucine 148, glycine 183, and alanine 204 to serine 205 each bind substrate.

It belongs to the triosephosphate isomerase family. As to quaternary structure, homotetramer; dimer of dimers.

The protein localises to the cytoplasm. The enzyme catalyses D-glyceraldehyde 3-phosphate = dihydroxyacetone phosphate. It functions in the pathway carbohydrate biosynthesis; gluconeogenesis. It participates in carbohydrate degradation; glycolysis; D-glyceraldehyde 3-phosphate from glycerone phosphate: step 1/1. Functionally, involved in the gluconeogenesis. Catalyzes stereospecifically the conversion of dihydroxyacetone phosphate (DHAP) to D-glyceraldehyde-3-phosphate (G3P). This chain is Triosephosphate isomerase, found in Pyrococcus abyssi (strain GE5 / Orsay).